Here is a 244-residue protein sequence, read N- to C-terminus: Orotidine 5'-phosphate decarboxylase (244 aa).

Residues D10, K32, 59 to 68, T122, R184, Q193, G213, and R214 contribute to the substrate site; that span reads DLKLHDIPNT. K61 functions as the Proton donor in the catalytic mechanism.

Belongs to the OMP decarboxylase family. Type 1 subfamily. In terms of assembly, homodimer.

The enzyme catalyses orotidine 5'-phosphate + H(+) = UMP + CO2. It functions in the pathway pyrimidine metabolism; UMP biosynthesis via de novo pathway; UMP from orotate: step 2/2. Functionally, catalyzes the decarboxylation of orotidine 5'-monophosphate (OMP) to uridine 5'-monophosphate (UMP). The chain is Orotidine 5'-phosphate decarboxylase from Geobacillus kaustophilus (strain HTA426).